The sequence spans 253 residues: Phycobilisome rod-core linker polypeptide CpcG4 (253 aa).

The PBS-linker domain maps to 11-191; that stretch reads SSQNHRVTSF…DFQEKAGTVQ (181 aa).

This sequence belongs to the phycobilisome linker protein family. In terms of assembly, part of the phycobilisome, a hemidiscoidal structure that is composed of two distinct substructures: a core complex and a number of rods radiating from the core.

The protein localises to the cellular thylakoid membrane. Its function is as follows. Rod-core linker protein required for attachment of phycocyanin to allophycocyanin in cores of phycobilisomes. Linker polypeptides determine the state of aggregation and the location of the disk-shaped phycobiliprotein units within the phycobilisome and modulate their spectroscopic properties in order to mediate a directed and optimal energy transfer. This chain is Phycobilisome rod-core linker polypeptide CpcG4, found in Nostoc sp. (strain PCC 7120 / SAG 25.82 / UTEX 2576).